The following is a 566-amino-acid chain: DDB1- and CUL4-associated factor 10 (566 aa).

2 disordered regions span residues 1–72 (MFPF…AERA) and 87–123 (TASASQAKLSPSSSPRRRSRPDWRAGGRSRQGLGAGL). Residues Ser50, Ser57, Ser67, Ser96, Ser99, and Ser100 each carry the phosphoserine modification. The span at 87 to 100 (TASASQAKLSPSSS) shows a compositional bias: low complexity. An Omega-N-methylarginine modification is found at Arg141. 4 WD repeats span residues 173–212 (RTHGAVFNLEYSPDGSVLTVACEQTEVLLFDPISSKHIKT), 216–254 (AHEDCVNNIRFLDNRLFATCSDDTTIALWDLRKLNTKVC), 258–297 (GHTSWVKNIEYDTNTRLLVTSGFDGNVIIWDTNRCTEDGC), and 303–342 (FHTRFLMRMRLTPDCSKMLISTSSGYLLILHELDLTKSLE). Residues 354 to 374 (TTSSSDLTTTSSSSGSRVSGS) are compositionally biased toward low complexity. Residues 354–413 (TTSSSDLTTTSSSSGSRVSGSPCHHNDSNSTEKHMSRASQREGVSPRNSLEVLTPEVPGE) form a disordered region. Residue Ser356 is modified to Phosphoserine. The span at 377-388 (HHNDSNSTEKHM) shows a compositional bias: basic and acidic residues. WD repeat units lie at residues 415–455 (DRGN…QEGA), 477–515 (VGRGYIKELCFSPDGRMISSPHGYGIRLLGFDKQCSELV), and 533–566 (SHNDVVLTTKFSPTHCQIASGCLSGRVSLYQPKF).

It belongs to the WD repeat DCAF10 family. In terms of assembly, interacts with DDB1.

The protein operates within protein modification; protein ubiquitination. Functionally, may function as a substrate receptor for CUL4-DDB1 E3 ubiquitin-protein ligase complex. The protein is DDB1- and CUL4-associated factor 10 (Dcaf10) of Mus musculus (Mouse).